We begin with the raw amino-acid sequence, 412 residues long: Putative oxidoreductase bli-4, mitochondrial (412 aa).

The N-terminal 55 residues, 1 to 55 (MSTKLCQRIARTATLSPTSLVPRSSRLIPIVSSAAVRPSSAIPTRRPFSTTESRY), are a transit peptide targeting the mitochondrion. Positions 108, 120, 186, 269, 273, 308, 310, and 312 each coordinate NADP(+). Tyrosine 269 (proton donor) is an active-site residue. Lysine 273 serves as the catalytic Lowers pKa of active site Tyr.

It belongs to the short-chain dehydrogenases/reductases (SDR) family.

It localises to the mitochondrion. Functionally, may play a role as an NAD-dependent dehydrogenase in the mitochondria. The protein is Putative oxidoreductase bli-4, mitochondrial (bli-4) of Neurospora crassa (strain ATCC 24698 / 74-OR23-1A / CBS 708.71 / DSM 1257 / FGSC 987).